Consider the following 570-residue polypeptide: Vacuolar protein sorting-associated protein 45 (570 aa).

2 positions are modified to phosphoserine: Ser307 and Ser441.

This sequence belongs to the STXBP/unc-18/SEC1 family. As to quaternary structure, interacts with ZFYVE20. Interacts with STX6.

The protein localises to the golgi apparatus membrane. It is found in the endosome membrane. May play a role in vesicle-mediated protein trafficking from the Golgi stack through the trans-Golgi network. In Mus musculus (Mouse), this protein is Vacuolar protein sorting-associated protein 45 (Vps45).